Consider the following 76-residue polypeptide: Tautomerase PptA (76 aa).

Pro2 (proton acceptor; via imino nitrogen) is an active-site residue.

It belongs to the 4-oxalocrotonate tautomerase family. PptA subfamily. In terms of assembly, homodimer.

The protein resides in the cytoplasm. The polypeptide is Tautomerase PptA (Enterobacter sp. (strain 638)).